A 663-amino-acid polypeptide reads, in one-letter code: Protein THEMIS2 (663 aa).

CABIT regions lie at residues 2–237 (EPVP…TASS) and 238–515 (QHIH…EAEG). Positions 545 to 663 (ASESQAPPPR…DMDDHDYEEI (119 aa)) are disordered. The span at 559 to 577 (QGINKKQQNIQSCKESSVK) shows a compositional bias: polar residues. At T596 the chain carries Phosphothreonine. A compositionally biased stretch (polar residues) spans 621 to 641 (NPQTQNSVLSMKPKTSSSLGK). The span at 653-663 (PDMDDHDYEEI) shows a compositional bias: acidic residues. Position 660 is a phosphotyrosine (Y660).

This sequence belongs to the themis family. Interacts with VAV1. Interacts with LAT. Interacts constitutively with GRB2, LYN and PLCG2; these interactions increase the activation of PLCG2 and its downstream pathways following B cell receptor stimulation. Post-translationally, phosphorylation at Tyr-660 is induced by LPS. Phosphorylated by Src kinases (Lck or Fyn) following BCR engagement. Expressed in both developing and mature B-cells with high expression in immature, follicular and B1 B cells. Also expressed in macrophages and dendritic cells. Down-regulated in splenocytes of mice developing arthritis in a collagen-induced model, not in those of mice failing to develop the disease. Transiently down-regulated in splenocytes of mice infected with influenza virus.

The protein resides in the nucleus. It localises to the cytoplasm. In terms of biological role, may constitute a control point in macrophage inflammatory response, promoting LPS-induced TLR4-mediated TNF production. Determines the threshold for activation of B cells by low-affinity and low-avidity ligands via PLCG2 activation and its downstream pathways. This is Protein THEMIS2 from Mus musculus (Mouse).